A 22-amino-acid chain; its full sequence is GLWEKIKEKASELVSGIVEGVK.

Lysine amide is present on Lys22.

In terms of tissue distribution, expressed by the skin parotoid and/or rostral glands.

The protein localises to the secreted. In terms of biological role, antibacterial peptide, that adopts an alpha helical conformation which can disrupt bacterial membranes. Each caerin displays a different antimicrobial specificity. This Ranoidea caerulea (Green tree frog) protein is Caerin-3.2.